The primary structure comprises 476 residues: UDP-N-acetylmuramoylalanine--D-glutamate ligase (476 aa).

Position 122–128 (122–128 (GSNAKST)) interacts with ATP.

This sequence belongs to the MurCDEF family.

Its subcellular location is the cytoplasm. The enzyme catalyses UDP-N-acetyl-alpha-D-muramoyl-L-alanine + D-glutamate + ATP = UDP-N-acetyl-alpha-D-muramoyl-L-alanyl-D-glutamate + ADP + phosphate + H(+). The protein operates within cell wall biogenesis; peptidoglycan biosynthesis. In terms of biological role, cell wall formation. Catalyzes the addition of glutamate to the nucleotide precursor UDP-N-acetylmuramoyl-L-alanine (UMA). This is UDP-N-acetylmuramoylalanine--D-glutamate ligase from Psychrobacter arcticus (strain DSM 17307 / VKM B-2377 / 273-4).